The following is a 79-amino-acid chain: Hemoglobin subunit zeta (79 aa).

Serine 1 carries the N-acetylserine modification. The region spanning 1–79 (SLTKTXXTII…FKLLSHXFLV (79 aa)) is the Globin domain. A phosphoserine mark is found at serine 38 and serine 53. Histidine 59 is a binding site for heme b.

The protein belongs to the globin family. In terms of assembly, heterotetramer of two zeta chains and two epsilon chains.

Functionally, the zeta chain is an alpha-type chain of mammalian embryonic hemoglobin. The polypeptide is Hemoglobin subunit zeta (Notamacropus eugenii (Tammar wallaby)).